We begin with the raw amino-acid sequence, 251 residues long: 3-deoxy-manno-octulosonate cytidylyltransferase (251 aa).

It belongs to the KdsB family.

It is found in the cytoplasm. It catalyses the reaction 3-deoxy-alpha-D-manno-oct-2-ulosonate + CTP = CMP-3-deoxy-beta-D-manno-octulosonate + diphosphate. The protein operates within nucleotide-sugar biosynthesis; CMP-3-deoxy-D-manno-octulosonate biosynthesis; CMP-3-deoxy-D-manno-octulosonate from 3-deoxy-D-manno-octulosonate and CTP: step 1/1. It functions in the pathway bacterial outer membrane biogenesis; lipopolysaccharide biosynthesis. In terms of biological role, activates KDO (a required 8-carbon sugar) for incorporation into bacterial lipopolysaccharide in Gram-negative bacteria. This Rhizobium etli (strain CIAT 652) protein is 3-deoxy-manno-octulosonate cytidylyltransferase.